Reading from the N-terminus, the 257-residue chain is Imidazole glycerol phosphate synthase subunit HisF (257 aa).

Catalysis depends on residues Asp-11 and Asp-130.

This sequence belongs to the HisA/HisF family. In terms of assembly, heterodimer of HisH and HisF.

It localises to the cytoplasm. The enzyme catalyses 5-[(5-phospho-1-deoxy-D-ribulos-1-ylimino)methylamino]-1-(5-phospho-beta-D-ribosyl)imidazole-4-carboxamide + L-glutamine = D-erythro-1-(imidazol-4-yl)glycerol 3-phosphate + 5-amino-1-(5-phospho-beta-D-ribosyl)imidazole-4-carboxamide + L-glutamate + H(+). It participates in amino-acid biosynthesis; L-histidine biosynthesis; L-histidine from 5-phospho-alpha-D-ribose 1-diphosphate: step 5/9. Its function is as follows. IGPS catalyzes the conversion of PRFAR and glutamine to IGP, AICAR and glutamate. The HisF subunit catalyzes the cyclization activity that produces IGP and AICAR from PRFAR using the ammonia provided by the HisH subunit. The chain is Imidazole glycerol phosphate synthase subunit HisF from Shewanella baltica (strain OS223).